Consider the following 188-residue polypeptide: Inosine triphosphate pyrophosphatase (188 aa).

Position 9 to 14 (9 to 14) interacts with ITP; sequence TGNAKK. Residue Glu-39 coordinates Mg(2+). ITP contacts are provided by residues Lys-51, 67-68, Lys-84, 143-146, Lys-166, and 171-172; these read DT, FGWD, and HR.

The protein belongs to the HAM1 NTPase family. In terms of assembly, homodimer. Requires Mg(2+) as cofactor. Mn(2+) serves as cofactor.

Its subcellular location is the cytoplasm. It carries out the reaction ITP + H2O = IMP + diphosphate + H(+). It catalyses the reaction dITP + H2O = dIMP + diphosphate + H(+). The enzyme catalyses XTP + H2O = XMP + diphosphate + H(+). Functionally, pyrophosphatase that hydrolyzes non-canonical purine nucleotides such as inosine triphosphate (ITP), deoxyinosine triphosphate (dITP) or xanthosine 5'-triphosphate (XTP) to their respective monophosphate derivatives. The enzyme does not distinguish between the deoxy- and ribose forms. Probably excludes non-canonical purines from RNA and DNA precursor pools, thus preventing their incorporation into RNA and DNA and avoiding chromosomal lesions. This Aedes aegypti (Yellowfever mosquito) protein is Inosine triphosphate pyrophosphatase.